The following is a 370-amino-acid chain: Cobalt-precorrin-5B C(1)-methyltransferase (370 aa).

This sequence belongs to the CbiD family.

The enzyme catalyses Co-precorrin-5B + S-adenosyl-L-methionine = Co-precorrin-6A + S-adenosyl-L-homocysteine. The protein operates within cofactor biosynthesis; adenosylcobalamin biosynthesis; cob(II)yrinate a,c-diamide from sirohydrochlorin (anaerobic route): step 6/10. Its function is as follows. Catalyzes the methylation of C-1 in cobalt-precorrin-5B to form cobalt-precorrin-6A. The protein is Cobalt-precorrin-5B C(1)-methyltransferase of Trichormus variabilis (strain ATCC 29413 / PCC 7937) (Anabaena variabilis).